Consider the following 303-residue polypeptide: Protoheme IX farnesyltransferase 1 (303 aa).

9 helical membrane passes run 18-38, 42-62, 91-111, 114-134, 139-159, 169-189, 213-233, 235-255, and 274-294; these read PGII…AAQG, LTLM…GCAV, AVLS…AIFT, LAVL…SLYM, VYGT…GYCA, VILL…IAIF, LHIV…PLAG, TGIA…AMAL, and FSII…QVVA.

The protein belongs to the UbiA prenyltransferase family. Protoheme IX farnesyltransferase subfamily.

It is found in the cell inner membrane. The catalysed reaction is heme b + (2E,6E)-farnesyl diphosphate + H2O = Fe(II)-heme o + diphosphate. It participates in porphyrin-containing compound metabolism; heme O biosynthesis; heme O from protoheme: step 1/1. In terms of biological role, converts heme B (protoheme IX) to heme O by substitution of the vinyl group on carbon 2 of heme B porphyrin ring with a hydroxyethyl farnesyl side group. In Shewanella frigidimarina (strain NCIMB 400), this protein is Protoheme IX farnesyltransferase 1.